Consider the following 436-residue polypeptide: tRNA modification GTPase MnmE (436 aa).

(6S)-5-formyl-5,6,7,8-tetrahydrofolate-binding residues include R20, E77, and K117. Residues G214–L360 form the TrmE-type G domain. GTP is bound by residues N224–S229, M243–T249, and D268–G271. Mg(2+)-binding residues include S228 and T249. K436 contacts (6S)-5-formyl-5,6,7,8-tetrahydrofolate.

It belongs to the TRAFAC class TrmE-Era-EngA-EngB-Septin-like GTPase superfamily. TrmE GTPase family. As to quaternary structure, homodimer. Heterotetramer of two MnmE and two MnmG subunits. It depends on K(+) as a cofactor.

Its subcellular location is the cytoplasm. Exhibits a very high intrinsic GTPase hydrolysis rate. Involved in the addition of a carboxymethylaminomethyl (cmnm) group at the wobble position (U34) of certain tRNAs, forming tRNA-cmnm(5)s(2)U34. In Bartonella quintana (strain Toulouse) (Rochalimaea quintana), this protein is tRNA modification GTPase MnmE.